The primary structure comprises 855 residues: Leucine--tRNA ligase (855 aa).

The 'HIGH' region motif lies at 45–55 (PYPSGRLHMGH). The 'KMSKS' region motif lies at 619–623 (KMSKS). An ATP-binding site is contributed by K622.

This sequence belongs to the class-I aminoacyl-tRNA synthetase family.

It is found in the cytoplasm. It carries out the reaction tRNA(Leu) + L-leucine + ATP = L-leucyl-tRNA(Leu) + AMP + diphosphate. The sequence is that of Leucine--tRNA ligase from Hyphomonas neptunium (strain ATCC 15444).